We begin with the raw amino-acid sequence, 541 residues long: Putative acyl-CoA dehydrogenase AidB (541 aa).

FAD contacts are provided by residues 182–191 (MGMTEKQGGS), Thr185, Ser191, 216–218 (FFS), Ser218, 423–433 (IWEGSGNIMCL), and Asn429. The segment at 445–541 (VYDLLSEAFV…LLRATGGVCV (97 aa)) is dsDNA-binding.

Belongs to the acyl-CoA dehydrogenase family. Homotetramer. Dimer of dimers. The cofactor is FAD.

Its subcellular location is the cytoplasm. In terms of biological role, part of the adaptive DNA-repair response to alkylating agents. Could prevent alkylation damage by protecting DNA and destroying alkylating agents that have yet to reach their DNA target. Binds to double-stranded DNA with a preference for a DNA region that includes its own promoter. Shows weak isovaleryl-CoA dehydrogenase activity in vitro. The polypeptide is Putative acyl-CoA dehydrogenase AidB (aidB) (Escherichia coli (strain K12)).